A 485-amino-acid polypeptide reads, in one-letter code: Betaine aldehyde dehydrogenase (485 aa).

Positions 23, 24, and 90 each coordinate K(+). 147-149 (GAW) is an NAD(+) binding site. Residue lysine 159 is the Charge relay system of the active site. Residues 173–176 (KPSE) and 226–229 (EVGT) each bind NAD(+). Leucine 241 contacts K(+). The active-site Proton acceptor is glutamate 247. NAD(+) contacts are provided by glycine 249, cysteine 281, and glutamate 382. Cysteine 281 acts as the Nucleophile in catalysis. A Cysteine sulfenic acid (-SOH) modification is found at cysteine 281. K(+) contacts are provided by lysine 452 and glycine 455. Glutamate 459 functions as the Charge relay system in the catalytic mechanism.

It belongs to the aldehyde dehydrogenase family. In terms of assembly, dimer of dimers. It depends on K(+) as a cofactor.

It catalyses the reaction betaine aldehyde + NAD(+) + H2O = glycine betaine + NADH + 2 H(+). The protein operates within amine and polyamine biosynthesis; betaine biosynthesis via choline pathway; betaine from betaine aldehyde: step 1/1. Involved in the biosynthesis of the osmoprotectant glycine betaine. Catalyzes the irreversible oxidation of betaine aldehyde to the corresponding acid. The protein is Betaine aldehyde dehydrogenase of Marinomonas sp. (strain MWYL1).